A 658-amino-acid polypeptide reads, in one-letter code: Outer dynein arm-docking complex subunit 1 (658 aa).

Coiled coils occupy residues 11–156, 186–234, and 303–380; these read KEVH…RYLN, REEA…KNDE, and NFIN…TDIQ. 2 disordered regions span residues 496–552 and 574–658; these read DEEE…SVSH and GAPV…RGYN. Ser-500, Ser-506, Ser-507, and Ser-509 each carry phosphoserine. 4 stretches are compositionally biased toward low complexity: residues 506-519, 574-583, 592-604, and 621-639; these read SSPS…QISL, GAPVSSRSSQ, TSSS…TGYL, and SMGS…HASS.

Belongs to the ODA1/DCC2 family. As to quaternary structure, component of the outer dynein arm-docking complex along with ODAD2, ODAD3, ODAD4 and CLXN. Interacts with ODAD3. Interacts with ODAD4; this interaction may facilitate the recruitment and/or attachment of outer dynein arm docking complex proteins including ODAD1, ODAD3, and ODAD4 to ciliary axonemes. Interacts with DNAH9. Interacts with MNS1. Interacts with PIERCE1 and PIERCE2; the interactions link the outer dynein arms docking complex (ODA-DC) to the internal microtubule inner proteins (MIP) in cilium axoneme. As to expression, expressed in motile ciliated tissues.

The protein resides in the cytoplasm. The protein localises to the cytoskeleton. It is found in the cilium axoneme. Functionally, component of the outer dynein arm-docking complex that mediates outer dynein arms (ODA) binding onto the doublet microtubule. Involved in mediating assembly of both ODAs and their axonemal docking complex onto ciliary microtubules. This chain is Outer dynein arm-docking complex subunit 1 (Odad1), found in Mus musculus (Mouse).